The chain runs to 205 residues: Putative 3-methyladenine DNA glycosylase (205 aa).

It belongs to the DNA glycosylase MPG family.

The protein is Putative 3-methyladenine DNA glycosylase of Bacillus cereus (strain B4264).